The chain runs to 844 residues: Receptor-like protein 49 (844 aa).

Residues 1-31 form the signal peptide; the sequence is MMYSCRERRMITVKWSLCLIFCLSNSILVFA. The Extracellular portion of the chain corresponds to 32 to 803; it reads KHLCLPDQRD…QDEEKEEEEQ (772 aa). N-linked (GlcNAc...) asparagine glycans are attached at residues Asn59, Asn95, Asn112, and Asn159. LRR repeat units follow at residues 102–126, 136–160, 161–183, 185–208, 209–231, 242–265, 266–290, 292–313, 315–339, 345–362, 363–385, 386–409, 410–434, 436–457, 458–481, 482–504, 506–527, 528–551, 553–574, 575–601, 602–625, 665–689, 690–713, 714–737, and 739–762; these read QHLQKLYLGCNTSFGSLSYNDGLKG, LKYLKVLSLRGCNLFGKIPSSLGNL, SYLTHLDLSFNDFTGVIPDSMGN, NYLRVLNLGKCNFYGKVPSSLGNL, SYLAQLDLSYNDFTREGPDSMGN, LNSLTDIDLGSNQLKGMLPSNMSS, LSKLEYFYIGGNSFSGSIPSSLFMI, SLVELDLQRNHFSALEIGNISS, SKLQVLILGGNNFNPDIVDLSIFSP, YLDVSGINLKISSTVSLP, SPIEYLVLSSCNISEFPKFLRNQ, TKLYSLDISANQIEGQVPEWLWSL, PELQSINISHNSFNGFEGPADVIQG, GELYMLDISSNIFQDPFPLLPV, DSMNFLFSSNNRFSGEIPKTICEL, DNLVMLVLSNNNFSGSIPRCFEN, HLYVLHLRNNNLSGIFPEEAIS, DRLQSLDVGHNLFSGELPKSLINC, ALEFLYVEDNRISDTFPSWLEL, LPNFQILVLRSNEFYGPIFSPGDSLSF, PRLRIFDISENRFTGVLPSDYFAP, FTIYKTIDVSGNRLEGDIPESISLL, KELIVLNMSNNAFTGHIPPSLSNL, SNLQSLDLSQNRLSGSIPGELGEL, and FLARMNFSYNRLEGPIPQTTQIQT. Asn207 carries an N-linked (GlcNAc...) asparagine glycan. Asn262 is a glycosylation site (N-linked (GlcNAc...) asparagine). Residue Asn310 is glycosylated (N-linked (GlcNAc...) asparagine). 2 N-linked (GlcNAc...) asparagine glycosylation sites follow: Asn374 and Asn384. An N-linked (GlcNAc...) asparagine glycan is attached at Asn416. Residues Asn493, Asn516, and Asn550 are each glycosylated (N-linked (GlcNAc...) asparagine). N-linked (GlcNAc...) asparagine glycosylation is found at Asn696 and Asn712. N-linked (GlcNAc...) asparagine glycosylation occurs at Asn744. Residues 804-824 traverse the membrane as a helical segment; that stretch reads VFSWIAAAIGYVPGVVCGLTI. Residues 825–844 are Cytoplasmic-facing; sequence GHILVSHKRDWFMRIVSLFT.

This sequence belongs to the RLP family.

The protein resides in the cell membrane. This is Receptor-like protein 49 from Arabidopsis thaliana (Mouse-ear cress).